Here is a 161-residue protein sequence, read N- to C-terminus: uncharacterized protein (161 aa).

Residues 1–10 (MSKQQEQDTP) show a composition bias toward polar residues. Disordered regions lie at residues 1-20 (MSKQQEQDTPSFGEIRQRLQ), 55-84 (KKTREEQIAEDEHAASLRRLGHAERSMSDE), and 118-161 (LLQQ…ANNS). Residues 82–107 (SDEEYARQLQEEMDRLDASIQMDKEA) adopt a coiled-coil conformation. Low complexity predominate over residues 144 to 161 (QQSSNTTTSSSCQSANNS).

This is an uncharacterized protein from Caenorhabditis elegans.